Reading from the N-terminus, the 123-residue chain is MARIAGVDLPREKRVEIGLTYIFGIGRTLSNEILRKTGINPDTRVKDLTDEEISKLREVIDKEYKVEGDLRREIALNIKRLMEIGCYRGRRHRAGLPVRGQRTKTNARTRKGPKKTVGVQRKK.

The disordered stretch occupies residues 94–123 (AGLPVRGQRTKTNARTRKGPKKTVGVQRKK). A compositionally biased stretch (basic residues) spans 101–123 (QRTKTNARTRKGPKKTVGVQRKK).

The protein belongs to the universal ribosomal protein uS13 family. Part of the 30S ribosomal subunit. Forms a loose heterodimer with protein S19. Forms two bridges to the 50S subunit in the 70S ribosome.

Its function is as follows. Located at the top of the head of the 30S subunit, it contacts several helices of the 16S rRNA. In the 70S ribosome it contacts the 23S rRNA (bridge B1a) and protein L5 of the 50S subunit (bridge B1b), connecting the 2 subunits; these bridges are implicated in subunit movement. Contacts the tRNAs in the A and P-sites. The protein is Small ribosomal subunit protein uS13 of Acetivibrio thermocellus (strain ATCC 27405 / DSM 1237 / JCM 9322 / NBRC 103400 / NCIMB 10682 / NRRL B-4536 / VPI 7372) (Clostridium thermocellum).